Reading from the N-terminus, the 122-residue chain is Large ribosomal subunit protein bL12 (122 aa).

This sequence belongs to the bacterial ribosomal protein bL12 family. Homodimer. Part of the ribosomal stalk of the 50S ribosomal subunit. Forms a multimeric L10(L12)X complex, where L10 forms an elongated spine to which 2 to 4 L12 dimers bind in a sequential fashion. Binds GTP-bound translation factors.

Its function is as follows. Forms part of the ribosomal stalk which helps the ribosome interact with GTP-bound translation factors. Is thus essential for accurate translation. The protein is Large ribosomal subunit protein bL12 of Streptococcus sanguinis (strain SK36).